Reading from the N-terminus, the 142-residue chain is Large ribosomal subunit protein uL13 (142 aa).

The protein belongs to the universal ribosomal protein uL13 family. In terms of assembly, part of the 50S ribosomal subunit.

This protein is one of the early assembly proteins of the 50S ribosomal subunit, although it is not seen to bind rRNA by itself. It is important during the early stages of 50S assembly. The sequence is that of Large ribosomal subunit protein uL13 from Vibrio vulnificus (strain CMCP6).